The sequence spans 274 residues: tRNA-cytidine(32) 2-sulfurtransferase (274 aa).

Positions 40–45 (SGGKDS) match the PP-loop motif motif. 3 residues coordinate [4Fe-4S] cluster: Cys-115, Cys-118, and Cys-206.

It belongs to the TtcA family. As to quaternary structure, homodimer. Mg(2+) is required as a cofactor. [4Fe-4S] cluster serves as cofactor.

The protein localises to the cytoplasm. It catalyses the reaction cytidine(32) in tRNA + S-sulfanyl-L-cysteinyl-[cysteine desulfurase] + AH2 + ATP = 2-thiocytidine(32) in tRNA + L-cysteinyl-[cysteine desulfurase] + A + AMP + diphosphate + H(+). Its pathway is tRNA modification. Catalyzes the ATP-dependent 2-thiolation of cytidine in position 32 of tRNA, to form 2-thiocytidine (s(2)C32). The sulfur atoms are provided by the cysteine/cysteine desulfurase (IscS) system. This chain is tRNA-cytidine(32) 2-sulfurtransferase, found in Pseudomonas putida (strain W619).